The sequence spans 847 residues: Putative membrane protein SCO5905 (847 aa).

12 consecutive transmembrane segments (helical) span residues 18–38 (AVVV…APAL), 187–207 (GGDK…LLAI), 215–235 (LVPL…GAIL), 248–268 (ASIM…IITA), 302–322 (IVLA…GFGP), 326–346 (LGVA…VLLL), 381–401 (VKVA…LLGY), 539–559 (DTTL…VLLL), 562–582 (LLAP…TLGA), 600–620 (VTAY…IFIM), 643–663 (TGGV…VLMT), and 672–692 (FGFA…PLLV). Residues 708–729 (RPGTPQTPSTPTSEPPSADAPA) form a disordered region. A run of 3 helical transmembrane segments spans residues 744–764 (FTWI…GMYL), 778–798 (FGTL…LVAI), and 808–828 (TIFA…EIWA).

Belongs to the resistance-nodulation-cell division (RND) (TC 2.A.6) family. MmpL subfamily.

It is found in the cell membrane. The chain is Putative membrane protein SCO5905 from Streptomyces coelicolor (strain ATCC BAA-471 / A3(2) / M145).